A 336-amino-acid chain; its full sequence is Ribosomal RNA large subunit methyltransferase F (336 aa).

The protein belongs to the methyltransferase superfamily. METTL16/RlmF family.

It is found in the cytoplasm. It catalyses the reaction adenosine(1618) in 23S rRNA + S-adenosyl-L-methionine = N(6)-methyladenosine(1618) in 23S rRNA + S-adenosyl-L-homocysteine + H(+). Functionally, specifically methylates the adenine in position 1618 of 23S rRNA. This is Ribosomal RNA large subunit methyltransferase F from Serratia proteamaculans (strain 568).